The sequence spans 510 residues: Bifunctional purine biosynthesis protein PurH (510 aa).

The MGS-like domain occupies 1–145; it reads MTKRALLSVS…KNFAAVLPIV (145 aa).

This sequence belongs to the PurH family.

It catalyses the reaction (6R)-10-formyltetrahydrofolate + 5-amino-1-(5-phospho-beta-D-ribosyl)imidazole-4-carboxamide = 5-formamido-1-(5-phospho-D-ribosyl)imidazole-4-carboxamide + (6S)-5,6,7,8-tetrahydrofolate. It carries out the reaction IMP + H2O = 5-formamido-1-(5-phospho-D-ribosyl)imidazole-4-carboxamide. Its pathway is purine metabolism; IMP biosynthesis via de novo pathway; 5-formamido-1-(5-phospho-D-ribosyl)imidazole-4-carboxamide from 5-amino-1-(5-phospho-D-ribosyl)imidazole-4-carboxamide (10-formyl THF route): step 1/1. It functions in the pathway purine metabolism; IMP biosynthesis via de novo pathway; IMP from 5-formamido-1-(5-phospho-D-ribosyl)imidazole-4-carboxamide: step 1/1. This chain is Bifunctional purine biosynthesis protein PurH, found in Lactiplantibacillus plantarum (strain ATCC BAA-793 / NCIMB 8826 / WCFS1) (Lactobacillus plantarum).